The chain runs to 23 residues: Augerpeptide hhe7a (23 aa).

3 disulfide bridges follow: C3–C11, C6–C19, and C10–C22.

Expressed by the venom duct.

It localises to the secreted. In terms of biological role, causes abnormal twist followed by immobility when injected into C.elegans. The sequence is that of Augerpeptide hhe7a from Hastula hectica (Sea snail).